Here is a 280-residue protein sequence, read N- to C-terminus: NAD kinase (280 aa).

D60 acts as the Proton acceptor in catalysis. NAD(+) contacts are provided by residues 60–61 (DG), 134–135 (ND), R145, D164, 175–180 (TAYSLS), and Q234.

Belongs to the NAD kinase family. A divalent metal cation is required as a cofactor.

The protein resides in the cytoplasm. The enzyme catalyses NAD(+) + ATP = ADP + NADP(+) + H(+). Involved in the regulation of the intracellular balance of NAD and NADP, and is a key enzyme in the biosynthesis of NADP. Catalyzes specifically the phosphorylation on 2'-hydroxyl of the adenosine moiety of NAD to yield NADP. This Carboxydothermus hydrogenoformans (strain ATCC BAA-161 / DSM 6008 / Z-2901) protein is NAD kinase.